We begin with the raw amino-acid sequence, 54 residues long: Insulin (54 aa).

Intrachain disulfides connect Cys-7–Cys-39, Cys-19–Cys-52, and Cys-38–Cys-43.

It belongs to the insulin family. In terms of assembly, heterodimer of a B chain and an A chain linked by two disulfide bonds.

The protein resides in the secreted. Functionally, insulin decreases blood glucose concentration. It increases cell permeability to monosaccharides, amino acids and fatty acids. It accelerates glycolysis, the pentose phosphate cycle, and glycogen synthesis in liver. The chain is Insulin (ins) from Squalus acanthias (Spiny dogfish).